Here is a 189-residue protein sequence, read N- to C-terminus: 5-hmdU DNA kinase (189 aa).

The protein belongs to the thymidylate kinase family. 5-hmdU DNA kinase subfamily.

The enzyme catalyses 5-hydroxymethyl-dUMP in DNA + ATP = 5-phosphomethyl-dUMP in DNA + ADP + H(+). In terms of biological role, phosphorylates 5-hydroxymethyluracil (5hmdU) into 5-phosphomethyl-2'-deoxyuridine (5- PmdU) on DNA as a step in the pathway leading to thymidine hypermodifications in the viral genome. The phosphate is added internally to the DNA polymer. As a final result of the pathway of hypermodification, 5-AcNmdU substitutes for a subset of thymidines in the viral DNA. These modifications probably prevent degradation of viral genome by the host restriction-modification antiviral defense system. The sequence is that of 5-hmdU DNA kinase from Pseudomonas phage PaMx11.